Here is a 372-residue protein sequence, read N- to C-terminus: MENDKKHNQKQNNVDENEFPNSKVLLVSVKRTRRFLERTARELLAGGTRYIILSGLGDALPLCVQLQSSLQSKNAANVVKIETSYSYFNSNYSYTPGLKIYMEKHPEFKGSRISPGYVSFHEKTDSFTPIYDENPNEYICSLNAGDNNLYVGGEGINGAFSELLSSHNQEVDKYESLFKELLTKAVNENGEKPDEEVKSVLYDNVDKKYPDVKLALCRIRNSLKKGSDHSTGSVFIVTFKKNFPHKKEKNMGMVYVVGPKGKNYNSVEEFLDEVQETAENLMTTLCDYNGLVKREEIKHVRMNTCRICLFSGSIFKHPNASKLDVAKAILNGLAVGYRHGPSPRLNFAYDENVFKDAWVETTGLQVFNHNEQ.

This sequence belongs to the histone-like Alba family. In terms of assembly, identified in a TARE6-associated complex consisting of over 30 proteins and including ALBA1, ALBA2 and ALBA4; the complex binds to the non-coding subtelomeric repeat region TARE6.

Its subcellular location is the nucleus. The protein localises to the chromosome. It is found in the telomere. The protein resides in the cytoplasm. Possesses DNA- and RNA-binding activities. Binds to DNA fragments longer than 14 base pairs with relaxed sequence specificity. Associates with the subtelomeric TARE6 repeats. Regulates the abundance of transcript sub-populations in a stage-specific manner. Regulates activation of male gametocytes. Participates in the coordination of sporozoite development in the oocyst. This Plasmodium falciparum (isolate 3D7) protein is DNA/RNA-binding protein ALBA4.